The primary structure comprises 229 residues: MPKKKVLTPLPYLASIVFLPWWISLSFNKSLEPWVTNWWNTKQSEIFLNDIQEKNVLERFIELEELVLLDEMIKEYPETHIQKLRIGIHKETIQLVKMQNQNDIQIILHFSTNIITLTILSGFFIMGNEELVILNSWVQEFFYNLSDTIKAFSILLLTDLCIGFHSPHGWELMIGSIYKDFGFAHNDQIISGLVSTFPVILDTILKYWIFHYLNRVSPSLVVIYHSMNE.

A run of 3 helical transmembrane segments spans residues 7-27 (LTPL…SLSF), 106-126 (IILH…FFIM), and 189-209 (IISG…KYWI).

It belongs to the CemA family.

The protein resides in the plastid. The protein localises to the chloroplast inner membrane. The catalysed reaction is K(+)(in) + H(+)(out) = K(+)(out) + H(+)(in). Functionally, contributes to K(+)/H(+) antiport activity by supporting proton efflux to control proton extrusion and homeostasis in chloroplasts in a light-dependent manner to modulate photosynthesis. Prevents excessive induction of non-photochemical quenching (NPQ) under continuous-light conditions. Indirectly promotes efficient inorganic carbon uptake into chloroplasts. This Ceratophyllum demersum (Rigid hornwort) protein is Potassium/proton antiporter CemA.